A 133-amino-acid chain; its full sequence is Small ribosomal subunit protein uS11 (133 aa).

The protein belongs to the universal ribosomal protein uS11 family. In terms of assembly, part of the 30S ribosomal subunit.

Located on the platform of the 30S subunit. In Pyrobaculum aerophilum (strain ATCC 51768 / DSM 7523 / JCM 9630 / CIP 104966 / NBRC 100827 / IM2), this protein is Small ribosomal subunit protein uS11.